Reading from the N-terminus, the 431-residue chain is Tyrosine--tRNA ligase (431 aa).

Tyr33 serves as a coordination point for L-tyrosine. The 'HIGH' region signature appears at 38 to 47 (PTADSLHIGS). L-tyrosine contacts are provided by Tyr172 and Gln176. The 'KMSKS' region signature appears at 234-238 (KFGKS). An ATP-binding site is contributed by Lys237. The S4 RNA-binding domain occupies 364–431 (INIVEVLNEK…KKNYFVLNVK (68 aa)).

The protein belongs to the class-I aminoacyl-tRNA synthetase family. TyrS type 1 subfamily. Homodimer.

The protein localises to the cytoplasm. It carries out the reaction tRNA(Tyr) + L-tyrosine + ATP = L-tyrosyl-tRNA(Tyr) + AMP + diphosphate + H(+). Functionally, catalyzes the attachment of tyrosine to tRNA(Tyr) in a two-step reaction: tyrosine is first activated by ATP to form Tyr-AMP and then transferred to the acceptor end of tRNA(Tyr). This chain is Tyrosine--tRNA ligase, found in Flavobacterium psychrophilum (strain ATCC 49511 / DSM 21280 / CIP 103535 / JIP02/86).